The following is a 1446-amino-acid chain: Receptor-type tyrosine-protein phosphatase U (1446 aa).

Residues 1–18 (MARAQALVLALTFQFCAP) form the signal peptide. Residues 19–749 (ETETPAAGCT…QRSEEMGLIL (731 aa)) lie on the Extracellular side of the membrane. An MAM domain is found at 25–188 (AGCTFEEASD…ILLFSYPCAK (164 aa)). An N-linked (GlcNAc...) asparagine glycan is attached at N75. The region spanning 190 to 275 (PHFSRLGDVE…SQAPRGAGVS (86 aa)) is the Ig-like C2-type domain. An intrachain disulfide couples C210 to C264. Fibronectin type-III domains are found at residues 288–383 (PIAP…CAEP), 386–484 (APKG…TDED), 485–591 (VPGG…SAPS), and 592–668 (FDYA…FGAE). N410 is a glycosylation site (N-linked (GlcNAc...) asparagine). N685 carries an N-linked (GlcNAc...) asparagine glycan. A helical transmembrane segment spans residues 750–770 (GICAGGLAVLILLLGAIIVII). The segment at 771–887 (RKGRDRYAYS…DLLQHINQMK (117 aa)) is mediates interaction with CTNNB1. Residues 771 to 1446 (RKGRDRYAYS…LEYLEALELR (676 aa)) are Cytoplasmic-facing. The interval 830-867 (PGYSPRGDQRSGGVTEASSLLGGSPRRPCGRKGSPYHT) is disordered. Phosphoserine occurs at positions 848, 853, and 863. Y865 is subject to Phosphotyrosine. Tyrosine-protein phosphatase domains follow at residues 888–1144 (TAEG…ILEA) and 1176–1439 (LREE…ALEY). Residues E1053, 1085–1091 (CSAGTGR), and Q1129 each bind substrate. C1085 (phosphocysteine intermediate) is an active-site residue. C1380 acts as the Phosphocysteine intermediate in catalysis.

This sequence belongs to the protein-tyrosine phosphatase family. Receptor class 2B subfamily. Forms homooligomeric complexes which mediate cell homotypic adhesion. Interacts (via the cytoplasmic juxtamembrane domain) with CTNNB1; may mediate interaction with the cadherin/catenin adhesion complex. Interacts with KIT. May interact with AP3B1. Post-translationally, the extracellular domain is proteolytically processed through cleavage within the fibronectin type-III 4 domain. In addition to the 190 kDa full-length protein, proteolytic products of 100 kDa, 80 kDa and 73 kDa are observed. In terms of processing, N-glycosylated. Phosphorylated on tyrosine residues upon activation of KIT with stem cell factor (SCF). The 73 kDa proteolytic product is not phosphorylated. As to expression, transcripts of different sizes are differentially expressed in a subset of tissues. Detected in brain, lung, skeletal muscle, heart, kidney and placenta. In brain; expressed in olfactory bulb, cerebral cortex, hippocampus and cerebellum.

The protein resides in the cell junction. Its subcellular location is the cell membrane. It carries out the reaction O-phospho-L-tyrosyl-[protein] + H2O = L-tyrosyl-[protein] + phosphate. Functionally, tyrosine-protein phosphatase which dephosphorylates CTNNB1. Regulates CTNNB1 function both in cell adhesion and signaling. May function in cell proliferation and migration and play a role in the maintenance of epithelial integrity. May play a role in megakaryocytopoiesis. This Mus musculus (Mouse) protein is Receptor-type tyrosine-protein phosphatase U (Ptpru).